Reading from the N-terminus, the 83-residue chain is Protein CASPARIAN STRIP INTEGRITY FACTOR 2 (83 aa).

Positions 1 to 28 are cleaved as a signal peptide; that stretch reads MGLLPLVKKLGFIIFLLVSASAFALCSA. The tract at residues 61–83 is disordered; that stretch reads SRDYGHSSPKPKLVRPPFKLIPN. At Tyr-64 the chain carries Sulfotyrosine. Residues Pro-69 and Pro-71 each carry the hydroxyproline modification.

Interacts with the specific receptor kinases GSO1 and GSO2. As to expression, expressed exclusively in the root stele.

In terms of biological role, peptide hormone required for contiguous Casparian strip diffusion barrier formation in roots via the regulation of CASPs protein expression and distribution in a GSO1-GSO2 signaling pathway. The Casparian strip is required for ion homeostasis (e.g. iron and potassium ions). The protein is Protein CASPARIAN STRIP INTEGRITY FACTOR 2 of Arabidopsis thaliana (Mouse-ear cress).